Consider the following 1606-residue polypeptide: E3 ubiquitin-protein ligase HECW1 (1606 aa).

One can recognise a C2 domain in the interval 182-318; that stretch reads SAAPIFKSIG…LERHAIGDRV (137 aa). Disordered regions lie at residues 349–418, 459–538, 566–672, and 730–815; these read DDEE…PAEE, AEQL…CSLP, LLHS…SCEG, and STVF…SQLP. Over residues 354 to 373 the composition is skewed to polar residues; it reads SLSTEPESAQIQDSPMNNLM. Over residues 380–392 the composition is skewed to basic and acidic residues; that stretch reads PRSEAPESSESWK. 2 stretches are compositionally biased toward acidic residues: residues 500-511 and 579-588; these read EEEEKEQEEEGD and AEEEDGAEEE. The segment covering 589 to 600 has biased composition (basic and acidic residues); sequence STLKDSSEKDGL. The segment covering 612-621 has biased composition (acidic residues); that stretch reads ALEEDREEPE. 3 stretches are compositionally biased toward polar residues: residues 651–663, 751–765, and 806–815; these read HPSTGSESDSSPR, DSMQSPELDPESTNG, and HNSQPVSQLP. The region spanning 829–862 is the WW 1 domain; the sequence is EPLPPNWEARIDSHGRVFYVDHVNRTTTWQRPTA. Positions 870–901 form a coiled coil; it reads RRSGSIQQMEQLNRRYQNIQRTIATERSEEDS. 3 positions are modified to phosphoserine: serine 874, serine 937, and serine 939. The tract at residues 894–938 is disordered; sequence TERSEEDSGSQSCEQAPAGGGGGGGSDSEAESSQSSLDLRREGSL. Residues 1018–1051 form the WW 2 domain; sequence LELPRGWEIKTDQQGKSFFVDHNSRATTFIDPRI. The HECT domain maps to 1271-1606; the sequence is SRKELQRNKL…VEETSTFGLE (336 aa). Cysteine 1574 functions as the Glycyl thioester intermediate in the catalytic mechanism.

As to quaternary structure, interacts with DVL1 and SSR3. Also interacts with mutant SOD1. As to expression, predominantly expressed in neurons of adult and fetal brain. Weakly expressed in the kidney.

Its subcellular location is the cytoplasm. The catalysed reaction is S-ubiquitinyl-[E2 ubiquitin-conjugating enzyme]-L-cysteine + [acceptor protein]-L-lysine = [E2 ubiquitin-conjugating enzyme]-L-cysteine + N(6)-ubiquitinyl-[acceptor protein]-L-lysine.. Its pathway is protein modification; protein ubiquitination. In terms of biological role, E3 ubiquitin-protein ligase that mediates ubiquitination and subsequent degradation of DVL1. Also targets the mutant SOD1 protein involved in familial amyotrophic lateral sclerosis (FALS). Forms cytotoxic aggregates with DVL1, SSR3 and mutant SOD1 that lead to motor neuron death in FALS. The chain is E3 ubiquitin-protein ligase HECW1 (HECW1) from Homo sapiens (Human).